Reading from the N-terminus, the 170-residue chain is Nicotinamide-nucleotide adenylyltransferase (170 aa).

It belongs to the archaeal NMN adenylyltransferase family.

Its subcellular location is the cytoplasm. The enzyme catalyses beta-nicotinamide D-ribonucleotide + ATP + H(+) = diphosphate + NAD(+). It functions in the pathway cofactor biosynthesis; NAD(+) biosynthesis; NAD(+) from nicotinamide D-ribonucleotide: step 1/1. The protein is Nicotinamide-nucleotide adenylyltransferase of Methanothrix thermoacetophila (strain DSM 6194 / JCM 14653 / NBRC 101360 / PT) (Methanosaeta thermophila).